The following is a 289-amino-acid chain: Shikimate dehydrogenase (NADP(+)) (289 aa).

Residues 19-21 and T66 contribute to the shikimate site; that span reads SLS. The active-site Proton acceptor is the K70. Residues N91 and D106 each contribute to the shikimate site. Residues 131–135 and L229 each bind NADP(+); that span reads GNGGA. Y231 provides a ligand contact to shikimate. Residue G252 coordinates NADP(+).

This sequence belongs to the shikimate dehydrogenase family. In terms of assembly, homodimer.

The enzyme catalyses shikimate + NADP(+) = 3-dehydroshikimate + NADPH + H(+). It functions in the pathway metabolic intermediate biosynthesis; chorismate biosynthesis; chorismate from D-erythrose 4-phosphate and phosphoenolpyruvate: step 4/7. In terms of biological role, involved in the biosynthesis of the chorismate, which leads to the biosynthesis of aromatic amino acids. Catalyzes the reversible NADPH linked reduction of 3-dehydroshikimate (DHSA) to yield shikimate (SA). This chain is Shikimate dehydrogenase (NADP(+)), found in Nostoc sp. (strain PCC 7120 / SAG 25.82 / UTEX 2576).